The sequence spans 118 residues: UPF0295 protein GWCH70_0499 (118 aa).

A run of 2 helical transmembrane segments spans residues 12–32 (IRTF…IGIF) and 42–62 (LFMI…FWIG).

The protein belongs to the UPF0295 family.

It is found in the cell membrane. The polypeptide is UPF0295 protein GWCH70_0499 (Geobacillus sp. (strain WCH70)).